Reading from the N-terminus, the 333-residue chain is Taste receptor type 2 member 38 (333 aa).

Residues 1-17 are Extracellular-facing; the sequence is MLTLTRICTVSYEVRST. A helical transmembrane segment spans residues 18 to 38; the sequence is FLFISVLEFAVGFLTNAFIFL. Residues 39–55 lie on the Cytoplasmic side of the membrane; it reads VNFWDVVKRQPLSNSDC. The helical transmembrane segment at 56-76 threads the bilayer; that stretch reads VLLCLSISRLFLHGLLFLSAI. At 77–94 the chain is on the extracellular side; sequence QLTHFQKLSEPLNHSYHA. Residues 95–115 traverse the membrane as a helical segment; the sequence is IIMLWMIANQANLWLATCLSL. The Cytoplasmic portion of the chain corresponds to 116–142; the sequence is LYCSKLIRSSHTFLICLASWVSRKICQ. Residues 143–163 traverse the membrane as a helical segment; sequence MLLGIILCSCICTVLCVWCYF. Over 164–190 the chain is Extracellular; sequence SRPHFTVTTVLFTNNNTRLNWQIKDLN. Asn-178 carries an N-linked (GlcNAc...) asparagine glycan. The helical transmembrane segment at 191-211 threads the bilayer; that stretch reads LFYSFLFCYLWSVPPFLLFLV. The Cytoplasmic segment spans residues 212–251; the sequence is SSGMLTVSLGRHMRTMKVYTRDFRDPSLEAHIKALKSLVS. Residues 252–272 traverse the membrane as a helical segment; it reads FFCFFVISSCAAFISVPLLIL. At 273 to 276 the chain is on the extracellular side; it reads WRDK. The helical transmembrane segment at 277–297 threads the bilayer; the sequence is IGVMVCVGIMAACPSGHAAIL. At 298-333 the chain is on the cytoplasmic side; sequence ISGNAKLRRAVTTILLWAQSSLKVRADHKADSRTLC.

Belongs to the G-protein coupled receptor T2R family.

The protein resides in the membrane. Functionally, receptor that may play a role in the perception of bitterness and is gustducin-linked. May play a role in sensing the chemical composition of the gastrointestinal content. The activity of this receptor may stimulate alpha gustducin, mediate PLC-beta-2 activation and lead to the gating of TRPM5. This chain is Taste receptor type 2 member 38 (TAS2R38), found in Hylobates klossii (Kloss's gibbon).